The primary structure comprises 338 residues: Fructose-1,6-bisphosphatase class 1 (338 aa).

Mg(2+) is bound by residues Glu-92, Asp-115, Leu-117, and Asp-118. Residues 118-121 (DGSS), Asn-211, Tyr-244, 262-264 (YLY), and Lys-274 contribute to the substrate site. Glu-280 serves as a coordination point for Mg(2+).

This sequence belongs to the FBPase class 1 family. Homotetramer. Requires Mg(2+) as cofactor.

Its subcellular location is the cytoplasm. It catalyses the reaction beta-D-fructose 1,6-bisphosphate + H2O = beta-D-fructose 6-phosphate + phosphate. The protein operates within carbohydrate biosynthesis; gluconeogenesis. The protein is Fructose-1,6-bisphosphatase class 1 of Vibrio vulnificus (strain YJ016).